The following is a 166-amino-acid chain: PTS system glucose-specific EIIA component (166 aa).

The region spanning 34 to 138 is the PTS EIIA type-1 domain; it reads DPVFAQKMMG…SVISPIIITN (105 aa). Residues histidine 71 and histidine 86 each contribute to the Zn(2+) site. Histidine 86 (tele-phosphohistidine intermediate; for EIIA activity) is an active-site residue. At histidine 86 the chain carries Phosphohistidine; by HPr.

Heterodimer with glycerol kinase (glpk). Requires Zn(2+) as cofactor.

The protein localises to the cytoplasm. Functionally, the phosphoenolpyruvate-dependent sugar phosphotransferase system (sugar PTS), a major carbohydrate active transport system, catalyzes the phosphorylation of incoming sugar substrates concomitantly with their translocation across the cell membrane. The enzyme II complex composed of PtsG and Crr is involved in glucose transport. This chain is PTS system glucose-specific EIIA component (crr), found in Staphylococcus aureus (strain COL).